Here is a 505-residue protein sequence, read N- to C-terminus: Glutamate--tRNA ligase (505 aa).

Positions 12–22 match the 'HIGH' region motif; sequence PSPTGALHIGG. A 'KMSKS' region motif is present at residues 260–264; the sequence is KLSKR. Lys-263 contacts ATP.

The protein belongs to the class-I aminoacyl-tRNA synthetase family. Glutamate--tRNA ligase type 1 subfamily. In terms of assembly, monomer.

It is found in the cytoplasm. The catalysed reaction is tRNA(Glu) + L-glutamate + ATP = L-glutamyl-tRNA(Glu) + AMP + diphosphate. Catalyzes the attachment of glutamate to tRNA(Glu) in a two-step reaction: glutamate is first activated by ATP to form Glu-AMP and then transferred to the acceptor end of tRNA(Glu). The protein is Glutamate--tRNA ligase of Parabacteroides distasonis (strain ATCC 8503 / DSM 20701 / CIP 104284 / JCM 5825 / NCTC 11152).